A 70-amino-acid polypeptide reads, in one-letter code: Brevinin-1MT2 (70 aa).

An N-terminal signal peptide occupies residues 1-22 (MFTLKKSMLLLFFLGTINLSLC). A propeptide spanning residues 23 to 44 (EQERNADEEERRDDDEMDVEVE) is cleaved from the precursor. Residues Cys64 and Cys70 are joined by a disulfide bond.

This sequence belongs to the frog skin active peptide (FSAP) family. Brevinin subfamily. As to expression, expressed by the skin glands.

It localises to the secreted. Functionally, antimicrobial peptide with activity against a variety of Gram-negative and Gram-positive bacteria and against fungi. Shows strong hemolytic activity against human erythrocytes. This Amolops mantzorum (Sichuan torrent frog) protein is Brevinin-1MT2.